Consider the following 331-residue polypeptide: uncharacterized protein (331 aa).

This sequence belongs to the ornithine cyclodeaminase/mu-crystallin family.

This is an uncharacterized protein from Sinorhizobium fredii (strain NBRC 101917 / NGR234).